A 385-amino-acid chain; its full sequence is MRILKSHPLLKLLNAYIIDHSQPTNINYLWNFGSLLGLCLGIQIITGVTLAMHYNPSVAEAFNSVEHIMRDVNNGWLIRYLHSNTASAFFFLVYLHIGRGFYYGSYRSPRTLAWILGVIILILMMGIGFLGYVLPYGQMSLWGATVITNLISAIPWIGQDIVEFIWGGFSVNNATLNRFFALHFVLPFVLAALVIMHLIAVHETAGASNPLGTPAYYDRIPFAPYYLFKDLITIFLFMFGLSIFVFFMPNVLGDSENYIMANPMQTPAAIVPEWYLLPFYAILRSIPNKLLGVIAMFASLVILMVLPKTDLGITKGLQFRPLSKIAFYLFVTNFLLLLQLGAKHVESPFIEFGQISTALYFAYYLIIMPGVSILENTLIDLSQKG.

Transmembrane regions (helical) follow at residues 32-52, 76-98, 113-133, and 179-199; these read FGSL…TLAM, WLIR…LHIG, AWIL…LGYV, and FFAL…MHLI. Positions 82 and 96 each coordinate heme b. His-183 and His-197 together coordinate heme b. Position 202 (His-202) interacts with a ubiquinone. The next 4 membrane-spanning stretches (helical) occupy residues 226–246, 290–310, 322–342, and 349–369; these read YLFK…IFVF, LLGV…PKTD, LSKI…QLGA, and FIEF…IIMP.

This sequence belongs to the cytochrome b family. As to quaternary structure, fungal cytochrome b-c1 complex contains 10 subunits; 3 respiratory subunits, 2 core proteins and 5 low-molecular weight proteins. Cytochrome b-c1 complex is a homodimer. Heme b serves as cofactor.

It is found in the mitochondrion inner membrane. Its function is as follows. Component of the ubiquinol-cytochrome c reductase complex (complex III or cytochrome b-c1 complex) that is part of the mitochondrial respiratory chain. The b-c1 complex mediates electron transfer from ubiquinol to cytochrome c. Contributes to the generation of a proton gradient across the mitochondrial membrane that is then used for ATP synthesis. The sequence is that of Cytochrome b (cob) from Akanthomyces muscarius (Entomopathogenic fungus).